The chain runs to 307 residues: UDP-N-acetylenolpyruvoylglucosamine reductase (307 aa).

The FAD-binding PCMH-type domain occupies 34 to 198 (LGGKADVYIT…LEATFALKKA (165 aa)). R177 is a catalytic residue. The active-site Proton donor is S227. The active site involves E297.

This sequence belongs to the MurB family. Requires FAD as cofactor.

The protein resides in the cytoplasm. It carries out the reaction UDP-N-acetyl-alpha-D-muramate + NADP(+) = UDP-N-acetyl-3-O-(1-carboxyvinyl)-alpha-D-glucosamine + NADPH + H(+). It functions in the pathway cell wall biogenesis; peptidoglycan biosynthesis. In terms of biological role, cell wall formation. The sequence is that of UDP-N-acetylenolpyruvoylglucosamine reductase from Oceanobacillus iheyensis (strain DSM 14371 / CIP 107618 / JCM 11309 / KCTC 3954 / HTE831).